Here is a 343-residue protein sequence, read N- to C-terminus: MKVSIIGATGYSGLELIRLIQQHSSVDIATLHSFSNQTNLLSNLYPHLKNLEASPLEKINPKDIIEKSETVFLATPSGISKDIALPYIDAGLNVIDLSGDFRLKNSQLYEKWYEKSAPLENYLMRAEYGLAEFRENKESTFIANPGCYATATLLGLAPLVKKQLIEPTSIIVDAKSGISGAGKVPSTSTHFTETNENMTLYKMNSHQHIPEIMQQLTKWDESIPAIQFSTSLIPITRGIFTTIYVRPKKPIAWEELHKLYESTYENAPFVRIQKENVYPTVKQVTASNYCDIGLAYNEITNVITIVSVIDNLVKGAAGQAIQNLNIMANFAENDGLGFIPVYP.

The active site involves Cys147.

This sequence belongs to the NAGSA dehydrogenase family. Type 1 subfamily.

Its subcellular location is the cytoplasm. The enzyme catalyses N-acetyl-L-glutamate 5-semialdehyde + phosphate + NADP(+) = N-acetyl-L-glutamyl 5-phosphate + NADPH + H(+). It functions in the pathway amino-acid biosynthesis; L-arginine biosynthesis; N(2)-acetyl-L-ornithine from L-glutamate: step 3/4. Its function is as follows. Catalyzes the NADPH-dependent reduction of N-acetyl-5-glutamyl phosphate to yield N-acetyl-L-glutamate 5-semialdehyde. The polypeptide is N-acetyl-gamma-glutamyl-phosphate reductase (Listeria welshimeri serovar 6b (strain ATCC 35897 / DSM 20650 / CCUG 15529 / CIP 8149 / NCTC 11857 / SLCC 5334 / V8)).